A 778-amino-acid chain; its full sequence is Arf-GAP with coiled-coil, ANK repeat and PH domain-containing protein 2 (778 aa).

In terms of domain architecture, BAR spans 1–226; it reads MKMTVDFEEC…MKDLGAQLDR (226 aa). The PH domain occupies 266-361; the sequence is GIVMEGYLFK…WIKAVQTSIA (96 aa). The interval 371–391 is disordered; the sequence is SEKLDKKSSPSTGSLDSGNES. The segment covering 379–388 has biased composition (polar residues); the sequence is SPSTGSLDSG. Ser384 and Ser387 each carry phosphoserine. The Arf-GAP domain occupies 399–520; it reads ESALQRVQCI…KFVDKYSISL (122 aa). The segment at 414 to 437 adopts a C4-type zinc-finger fold; sequence CCDCGLADPRWASINLGITLCIEC. At Ser521 the chain carries Phosphoserine. The interval 540 to 599 is disordered; the sequence is SISKFGPGDQVRASAQSSVRSNDSGIQQSSDDGRESLPSTVSANSLYEPEGERQDSSMFL. Positions 552–569 are enriched in polar residues; the sequence is ASAQSSVRSNDSGIQQSS. Ser581 and Ser584 each carry phosphoserine. 3 ANK repeats span residues 640–669, 673–702, and 706–735; these read NKATPLIQAVLGGSLVTCEFLLQNGANVNQ, QGRGPLHHATVLGHTGQVCLFLKRGANQHA, and EGKDPLSIAVEAANADIVTLLRLARMNEEM. At Tyr742 the chain carries Phosphotyrosine. Ser775 is subject to Phosphoserine.

As to quaternary structure, interacts (via KANK domains) with RAB35 (GTP-bound form); the interaction is direct and probably recruits ACAP2 to membranes including plasma membrane. Interacts with MICALL1; the interaction is indirect through RAB35. As to expression, widely expressed. Highest level in lung.

The protein resides in the cell membrane. It localises to the endosome membrane. With respect to regulation, GAP activity stimulated by phosphatidylinositol 4,5-bisphosphate (PIP2) and phosphatidic acid. In terms of biological role, GTPase-activating protein (GAP) for ADP ribosylation factor 6 (ARF6). Doesn't show GAP activity for RAB35. The protein is Arf-GAP with coiled-coil, ANK repeat and PH domain-containing protein 2 (ACAP2) of Homo sapiens (Human).